A 145-amino-acid chain; its full sequence is D-aminoacyl-tRNA deacylase (145 aa).

The short motif at 137 to 138 (GP) is the Gly-cisPro motif, important for rejection of L-amino acids element.

This sequence belongs to the DTD family. Homodimer.

It localises to the cytoplasm. It carries out the reaction glycyl-tRNA(Ala) + H2O = tRNA(Ala) + glycine + H(+). The catalysed reaction is a D-aminoacyl-tRNA + H2O = a tRNA + a D-alpha-amino acid + H(+). In terms of biological role, an aminoacyl-tRNA editing enzyme that deacylates mischarged D-aminoacyl-tRNAs. Also deacylates mischarged glycyl-tRNA(Ala), protecting cells against glycine mischarging by AlaRS. Acts via tRNA-based rather than protein-based catalysis; rejects L-amino acids rather than detecting D-amino acids in the active site. By recycling D-aminoacyl-tRNA to D-amino acids and free tRNA molecules, this enzyme counteracts the toxicity associated with the formation of D-aminoacyl-tRNA entities in vivo and helps enforce protein L-homochirality. The chain is D-aminoacyl-tRNA deacylase from Shewanella oneidensis (strain ATCC 700550 / JCM 31522 / CIP 106686 / LMG 19005 / NCIMB 14063 / MR-1).